Here is a 348-residue protein sequence, read N- to C-terminus: Phospho-2-dehydro-3-deoxyheptonate aldolase, Trp-sensitive (348 aa).

The protein belongs to the class-I DAHP synthase family.

It catalyses the reaction D-erythrose 4-phosphate + phosphoenolpyruvate + H2O = 7-phospho-2-dehydro-3-deoxy-D-arabino-heptonate + phosphate. It participates in metabolic intermediate biosynthesis; chorismate biosynthesis; chorismate from D-erythrose 4-phosphate and phosphoenolpyruvate: step 1/7. Stereospecific condensation of phosphoenolpyruvate (PEP) and D-erythrose-4-phosphate (E4P) giving rise to 3-deoxy-D-arabino-heptulosonate-7-phosphate (DAHP). The sequence is that of Phospho-2-dehydro-3-deoxyheptonate aldolase, Trp-sensitive (aroH) from Salmonella typhi.